Consider the following 446-residue polypeptide: tRNA-2-methylthio-N(6)-dimethylallyladenosine synthase (446 aa).

The MTTase N-terminal domain maps to 2–122 (KKAYVKSYGC…LPDLLRQSRE (121 aa)). [4Fe-4S] cluster is bound by residues Cys-11, Cys-47, Cys-85, Cys-157, Cys-161, and Cys-164. Residues 143–375 (RNRGVTGFLT…QDLLDRQRHA (233 aa)) form the Radical SAM core domain. Residues 378-440 (AASVGTLTEI…SNSLFGETLE (63 aa)) enclose the TRAM domain.

Belongs to the methylthiotransferase family. MiaB subfamily. In terms of assembly, monomer. Requires [4Fe-4S] cluster as cofactor.

The protein localises to the cytoplasm. The enzyme catalyses N(6)-dimethylallyladenosine(37) in tRNA + (sulfur carrier)-SH + AH2 + 2 S-adenosyl-L-methionine = 2-methylsulfanyl-N(6)-dimethylallyladenosine(37) in tRNA + (sulfur carrier)-H + 5'-deoxyadenosine + L-methionine + A + S-adenosyl-L-homocysteine + 2 H(+). Functionally, catalyzes the methylthiolation of N6-(dimethylallyl)adenosine (i(6)A), leading to the formation of 2-methylthio-N6-(dimethylallyl)adenosine (ms(2)i(6)A) at position 37 in tRNAs that read codons beginning with uridine. This Methylorubrum extorquens (strain PA1) (Methylobacterium extorquens) protein is tRNA-2-methylthio-N(6)-dimethylallyladenosine synthase.